Consider the following 66-residue polypeptide: Large ribosomal subunit protein bL35 (66 aa).

Composition is skewed to basic residues over residues 1–16 (MPKF…RFKR) and 23–45 (KRSH…RQLR). The interval 1–66 (MPKFKTHRAS…RIRQMLSGLK (66 aa)) is disordered.

The protein belongs to the bacterial ribosomal protein bL35 family.

The polypeptide is Large ribosomal subunit protein bL35 (Latilactobacillus sakei subsp. sakei (strain 23K) (Lactobacillus sakei subsp. sakei)).